Consider the following 394-residue polypeptide: 1-deoxy-D-xylulose 5-phosphate reductoisomerase (394 aa).

The NADPH site is built by T12, G13, S14, I15, G38, and N126. K127 lines the 1-deoxy-D-xylulose 5-phosphate pocket. NADPH is bound at residue E128. D151 provides a ligand contact to Mn(2+). 1-deoxy-D-xylulose 5-phosphate contacts are provided by S152, E153, S177, and H200. Residue E153 participates in Mn(2+) binding. Position 206 (G206) interacts with NADPH. The 1-deoxy-D-xylulose 5-phosphate site is built by S213, N218, K219, and E222. Residue E222 coordinates Mn(2+).

It belongs to the DXR family. Mg(2+) serves as cofactor. The cofactor is Mn(2+).

It carries out the reaction 2-C-methyl-D-erythritol 4-phosphate + NADP(+) = 1-deoxy-D-xylulose 5-phosphate + NADPH + H(+). It functions in the pathway isoprenoid biosynthesis; isopentenyl diphosphate biosynthesis via DXP pathway; isopentenyl diphosphate from 1-deoxy-D-xylulose 5-phosphate: step 1/6. In terms of biological role, catalyzes the NADPH-dependent rearrangement and reduction of 1-deoxy-D-xylulose-5-phosphate (DXP) to 2-C-methyl-D-erythritol 4-phosphate (MEP). In Beutenbergia cavernae (strain ATCC BAA-8 / DSM 12333 / CCUG 43141 / JCM 11478 / NBRC 16432 / NCIMB 13614 / HKI 0122), this protein is 1-deoxy-D-xylulose 5-phosphate reductoisomerase.